A 333-amino-acid polypeptide reads, in one-letter code: DNA repair and recombination protein RadA (333 aa).

127–134 (GEFGSGKT) is an ATP binding site.

The protein belongs to the eukaryotic RecA-like protein family.

Functionally, involved in DNA repair and in homologous recombination. Binds and assemble on single-stranded DNA to form a nucleoprotein filament. Hydrolyzes ATP in a ssDNA-dependent manner and promotes DNA strand exchange between homologous DNA molecules. The polypeptide is DNA repair and recombination protein RadA (Pyrobaculum arsenaticum (strain DSM 13514 / JCM 11321 / PZ6)).